We begin with the raw amino-acid sequence, 770 residues long: Transducin-like enhancer protein 1 (770 aa).

Positions 1–131 are q domain; the sequence is MFPQSRHPTP…IIGQQQLQAQ (131 aa). Disordered stretches follow at residues 128-157 and 176-346; these read LQAQHLSHGHGPPVPLTPHPSGLQPPGIPP and HLAI…PAME. Positions 132 to 199 are GP domain; that stretch reads HLSHGHGPPV…RHRDRESGTS (68 aa). A compositionally biased stretch (low complexity) spans 146 to 157; it reads HPSGLQPPGIPP. Basic and acidic residues-rich tracts occupy residues 178 to 196 and 209 to 244; these read AIKDDKKHHDAERHRDRES and RSTDKRRNGPEFSSDIKKRKVDDKDNYDSDGDKSDD. Residues 200–266 are ccN domain; that stretch reads NSLLVPDSLR…SPHASPTHSP (67 aa). The Nuclear localization signal motif lies at 225-228; sequence KKRK. Phosphoserine; by CK2 is present on serine 237. Residues 255-264 are compositionally biased toward low complexity; it reads PSSPHASPTH. A phosphoserine; by CDK1 mark is found at serine 257, serine 261, and serine 265. Basic and acidic residues predominate over residues 265-281; it reads SPRENGIDKNRLLKKDA. Positions 267-450 are SP domain; sequence RENGIDKNRL…GGKPAYSFHV (184 aa). Over residues 282–297 the composition is skewed to low complexity; it reads SGSPASTASSGSSSSL. Phosphoserine is present on serine 284. The span at 298–308 shows a compositional bias: basic and acidic residues; sequence KSKEVSLHEKA. WD repeat units follow at residues 470-501, 528-558, 572-602, 614-644, 696-726, and 737-767; these read GIPRHARQINTLNHGEVVCAVTISNPTRHVYT, NRDNYIRSCKLLPDGCTLIVGGEASTLSIWD, SSAPACYALAISPDSKVCFSCCSDGNIAVWD, GHTDGASCIDISNDGTKLWTGGLDNTVRSWD, LHESCVLSLKFAYCGKWFVSTGKDNLLNAWR, and KESSSVLSCDISVDDKYIVTGSGDKKATVYE.

The protein belongs to the WD repeat Groucho/TLE family. In terms of assembly, homooligomer and heterooligomer with other family members. Binds RUNX1, RUNX3, FOXA2, KDM6A, UTY, histone H3, HESX1, ESRRG and the NF-kappa-B subunit RELA. Interacts with HES1 (via WRPW motif). Binds TCF7, LEF1, TCF7L1 and TCF7L2. Interacts with SIX3. Interacts with EFNB1. Interacts with TLE4. Interacts with FOXG1/BF-1; the interaction is inhibited by TLE6/GRG6. Post-translationally, phosphorylated, probably by CDK1. The degree of phosphorylation varies throughout the cell cycle, and is highest at the G2/M transition. Becomes hyperphosphorylated in response to cell differentiation and interaction with HES1 or RUNX1. Ubiquitinated by XIAP/BIRC4. As to expression, highly expressed in liver and lung. Detected at slightly lower levels in heart, brain, kidney and testis. Detected in fetal and adult stomach and small intestine, in adult ileum, duodenum and colon. Expressed in bone marrow-derived macrophages. Most abundant at the base of the crypts of Lieberkuhn in the small intestine.

Its subcellular location is the nucleus. It localises to the cytoplasm. Its function is as follows. Transcriptional corepressor that binds to a number of transcription factors. Inhibits NF-kappa-B-regulated gene expression. Inhibits the transcriptional activation mediated by FOXA2, and by CTNNB1 and TCF family members in Wnt signaling. Enhances FOXG1/BF-1- and HES1-mediated transcriptional repression. The effects of full-length TLE family members may be modulated by association with dominant-negative AES. Unusual function as coactivator for ESRRG. This is Transducin-like enhancer protein 1 (Tle1) from Mus musculus (Mouse).